The sequence spans 477 residues: Ribulose bisphosphate carboxylase large chain (477 aa).

A propeptide spanning residues 1 to 2 (MS) is cleaved from the precursor. P3 is subject to N-acetylproline. The residue at position 14 (K14) is an N6,N6,N6-trimethyllysine. Substrate-binding residues include N123 and T173. K175 functions as the Proton acceptor in the catalytic mechanism. K177 contacts substrate. Residues K201, D203, and E204 each coordinate Mg(2+). K201 carries the post-translational modification N6-carboxylysine. The active-site Proton acceptor is the H294. Residues R295, H327, and S379 each contribute to the substrate site.

This sequence belongs to the RuBisCO large chain family. Type I subfamily. Heterohexadecamer of 8 large chains and 8 small chains; disulfide-linked. The disulfide link is formed within the large subunit homodimers. The cofactor is Mg(2+). The disulfide bond which can form in the large chain dimeric partners within the hexadecamer appears to be associated with oxidative stress and protein turnover.

The protein localises to the plastid. The protein resides in the chloroplast. The catalysed reaction is 2 (2R)-3-phosphoglycerate + 2 H(+) = D-ribulose 1,5-bisphosphate + CO2 + H2O. The enzyme catalyses D-ribulose 1,5-bisphosphate + O2 = 2-phosphoglycolate + (2R)-3-phosphoglycerate + 2 H(+). In terms of biological role, ruBisCO catalyzes two reactions: the carboxylation of D-ribulose 1,5-bisphosphate, the primary event in carbon dioxide fixation, as well as the oxidative fragmentation of the pentose substrate in the photorespiration process. Both reactions occur simultaneously and in competition at the same active site. This Nicotiana debneyi (Debney's tobacco) protein is Ribulose bisphosphate carboxylase large chain.